Reading from the N-terminus, the 887-residue chain is Alanine--tRNA ligase (887 aa).

H563, H567, C677, and H681 together coordinate Zn(2+).

This sequence belongs to the class-II aminoacyl-tRNA synthetase family. The cofactor is Zn(2+).

It is found in the cytoplasm. It catalyses the reaction tRNA(Ala) + L-alanine + ATP = L-alanyl-tRNA(Ala) + AMP + diphosphate. Functionally, catalyzes the attachment of alanine to tRNA(Ala) in a two-step reaction: alanine is first activated by ATP to form Ala-AMP and then transferred to the acceptor end of tRNA(Ala). Also edits incorrectly charged Ser-tRNA(Ala) and Gly-tRNA(Ala) via its editing domain. The chain is Alanine--tRNA ligase from Dinoroseobacter shibae (strain DSM 16493 / NCIMB 14021 / DFL 12).